A 376-amino-acid polypeptide reads, in one-letter code: Probable plastid-lipid-associated protein 3, chloroplastic (376 aa).

A chloroplast-targeting transit peptide spans 1–53 (MATLFTVARPSSLLYVSSINPSKTFSPSISLKLNSLSFSFGYRPKPLRFSKIR). Residues 54–146 (SSLPSESESE…EADAGNGSAV (93 aa)) are disordered. Positions 85–96 (PDSQPDNVTVNV) are enriched in polar residues. The span at 117–126 (MESDPPRNED) shows a compositional bias: basic and acidic residues.

The protein belongs to the PAP/fibrillin family.

It localises to the plastid. It is found in the chloroplast. Its subcellular location is the plastoglobule. Functionally, probably involved in light/cold stress-related jasmonate (JA) biosynthesis. This chain is Probable plastid-lipid-associated protein 3, chloroplastic (PAP3), found in Arabidopsis thaliana (Mouse-ear cress).